A 232-amino-acid polypeptide reads, in one-letter code: 5'-methylthioadenosine/S-adenosylhomocysteine nucleosidase (232 aa).

Glu12 functions as the Proton acceptor in the catalytic mechanism. Substrate is bound by residues Gly78, Ile152, and 173–174 (ME). Residue Asp197 is the Proton donor of the active site.

The protein belongs to the PNP/UDP phosphorylase family. MtnN subfamily. In terms of assembly, homodimer.

It catalyses the reaction S-adenosyl-L-homocysteine + H2O = S-(5-deoxy-D-ribos-5-yl)-L-homocysteine + adenine. It carries out the reaction S-methyl-5'-thioadenosine + H2O = 5-(methylsulfanyl)-D-ribose + adenine. The catalysed reaction is 5'-deoxyadenosine + H2O = 5-deoxy-D-ribose + adenine. It functions in the pathway amino-acid biosynthesis; L-methionine biosynthesis via salvage pathway; S-methyl-5-thio-alpha-D-ribose 1-phosphate from S-methyl-5'-thioadenosine (hydrolase route): step 1/2. In terms of biological role, catalyzes the irreversible cleavage of the glycosidic bond in both 5'-methylthioadenosine (MTA) and S-adenosylhomocysteine (SAH/AdoHcy) to adenine and the corresponding thioribose, 5'-methylthioribose and S-ribosylhomocysteine, respectively. Also cleaves 5'-deoxyadenosine, a toxic by-product of radical S-adenosylmethionine (SAM) enzymes, into 5-deoxyribose and adenine. Thus, is required for in vivo function of the radical SAM enzymes biotin synthase and lipoic acid synthase, that are inhibited by 5'-deoxyadenosine accumulation. This chain is 5'-methylthioadenosine/S-adenosylhomocysteine nucleosidase, found in Klebsiella pneumoniae subsp. pneumoniae (strain ATCC 700721 / MGH 78578).